Consider the following 360-residue polypeptide: Autoinducer 2 import system permease protein LsrC (360 aa).

Helical transmembrane passes span 18–38 (TALL…RNYF), 45–65 (MIFS…MVML), 76–96 (ITGL…GLAL), 99–119 (LFAL…VTWL), 121–141 (IPAI…MLLL), 161–181 (ILFS…AMAL), 219–239 (MNGV…GFIP), 255–275 (VLGG…ILGA), and 290–310 (LPAW…LVFD). Residues 334-360 (VAPDKKVKSNNNKAPSSKSFTKKEVVR) form a disordered region. Low complexity predominate over residues 342-352 (SNNNKAPSSKS).

The protein belongs to the binding-protein-dependent transport system permease family. AraH/RbsC subfamily. In terms of assembly, the complex is composed of two ATP-binding proteins (LsrA), two transmembrane proteins (LsrC and LsrD) and a solute-binding protein (LsrB).

It is found in the cell inner membrane. Part of the ABC transporter complex LsrABCD involved in autoinducer 2 (AI-2) import. Probably responsible for the translocation of the substrate across the membrane. The chain is Autoinducer 2 import system permease protein LsrC (lsrC) from Yersinia enterocolitica serotype O:8 / biotype 1B (strain NCTC 13174 / 8081).